Reading from the N-terminus, the 1050-residue chain is Probable beta-glucosidase E (1050 aa).

The tract at residues 1–87 (MPPPDSNPGS…RSSSTNGGHN (87 aa)) is disordered. At 1–174 (MPPPDSNPGS…VKYARIWRRT (174 aa)) the chain is on the cytoplasmic side. The span at 11 to 20 (FRDHLKHDNK) shows a compositional bias: basic and acidic residues. The span at 47–56 (SPRSASASSS) shows a compositional bias: low complexity. The segment covering 78 to 87 (RSSSTNGGHN) has biased composition (polar residues). Residues 175–195 (LVVVIVALALLVWGFLRFTAA) traverse the membrane as a helical; Signal-anchor for type II membrane protein segment. At 196-1050 (QRQGPKVWPM…SRDLPLQAKY (855 aa)) the chain is on the extracellular side. Residues N236, N244, N300, and N430 are each glycosylated (N-linked (GlcNAc...) asparagine). The active site involves D458. N-linked (GlcNAc...) asparagine glycosylation is found at N501, N540, N605, N884, N920, N929, and N993.

The protein belongs to the glycosyl hydrolase 3 family.

Its subcellular location is the cell membrane. It carries out the reaction Hydrolysis of terminal, non-reducing beta-D-glucosyl residues with release of beta-D-glucose.. It participates in glycan metabolism; cellulose degradation. In terms of biological role, beta-glucosidases are one of a number of cellulolytic enzymes involved in the degradation of cellulosic biomass. Catalyzes the last step releasing glucose from the inhibitory cellobiose. This Aspergillus clavatus (strain ATCC 1007 / CBS 513.65 / DSM 816 / NCTC 3887 / NRRL 1 / QM 1276 / 107) protein is Probable beta-glucosidase E (bglE).